We begin with the raw amino-acid sequence, 1019 residues long: Macrophage colony-stimulating factor 1 receptor 2 (1019 aa).

Residues 1–18 form the signal peptide; the sequence is MKSYCLLLSITLSCCCSA. Residues 19-576 are Extracellular-facing; that stretch reads EDLPDPPSIH…LREHNSAFMS (558 aa). Ig-like C2-type domains follow at residues 37–109, 106–212, and 224–312; these read QAEA…IHLY, IHLY…LLVA, and QNKA…LIVL. A disulfide bridge links cysteine 52 with cysteine 92. Asparagine 96, asparagine 148, asparagine 169, asparagine 249, asparagine 342, asparagine 346, asparagine 355, asparagine 369, asparagine 379, asparagine 408, asparagine 422, asparagine 429, asparagine 433, and asparagine 514 each carry an N-linked (GlcNAc...) asparagine glycan. 2 cysteine pairs are disulfide-bonded: cysteine 139–cysteine 193 and cysteine 239–cysteine 294. Ig-like C2-type domains follow at residues 383-474 and 487-567; these read STTV…LRIY and TLTC…VFHL. A disulfide bridge connects residues cysteine 490 and cysteine 552. Residues 577–597 traverse the membrane as a helical segment; that stretch reads ALIGAGSTAAILFLLLLVVFY. Topologically, residues 598-1019 are cytoplasmic; it reads KWRQKPKYEI…LSVTNIYQLS (422 aa). Residues 601-633 form a regulatory juxtamembrane domain region; sequence QKPKYEIRWKIIESTEGNHYTFVDPTLLPYNYK. At tyrosine 620 the chain carries Phosphotyrosine; by autocatalysis. In terms of domain architecture, Protein kinase spans 641-963; it reads LRLGAVLGSG…MICQLIDRLL (323 aa). ATP is bound by residues 647–655 and lysine 674; that span reads LGSGAFGKV. A phosphotyrosine; by autocatalysis mark is found at tyrosine 756 and tyrosine 778. Residue aspartate 827 is the Proton acceptor of the active site. Residues 845 to 867 are activation loop; sequence DFGLARDIQNDDSYIVQGNARLP. 2 positions are modified to phosphotyrosine; by autocatalysis: tyrosine 858 and tyrosine 974. Residues 970–1001 form a disordered region; it reads NHQSYSNINETKKDDFKGGKSQRRGEEEEQRR. A compositionally biased stretch (basic and acidic residues) spans 979–1001; that stretch reads ETKKDDFKGGKSQRRGEEEEQRR. Phosphotyrosine; by autocatalysis is present on tyrosine 1016.

This sequence belongs to the protein kinase superfamily. Tyr protein kinase family. CSF-1/PDGF receptor subfamily. In terms of assembly, monomer. Homodimer. Interacts with CSF1. In terms of processing, autophosphorylated in response to CSF1 binding. autophosphorylation, leading to its degradation. Post-translationally, ubiquitinated. Becomes rapidly polyubiquitinated after autophosphorylation, leading to its degradation.

Its subcellular location is the cell membrane. The enzyme catalyses L-tyrosyl-[protein] + ATP = O-phospho-L-tyrosyl-[protein] + ADP + H(+). Its activity is regulated as follows. Present in an inactive conformation in the absence of bound ligand. CSF1 binding leads to dimerization and activation by autophosphorylation on tyrosine residues. Tyrosine-protein kinase that acts as a cell-surface receptor for CSF1 and plays an essential role in the regulation of survival, proliferation and differentiation of hematopoietic precursor cells, especially mononuclear phagocytes, such as macrophages and monocytes. Plays an important role in innate immunity and in inflammatory processes. Plays an important role in the regulation of osteoclast proliferation and differentiation, the regulation of bone resorption, and is required for normal bone development. Promotes reorganization of the actin cytoskeleton, regulates formation of membrane ruffles, cell adhesion and cell migration. Activates several signaling pathways in response to ligand binding. This Takifugu rubripes (Japanese pufferfish) protein is Macrophage colony-stimulating factor 1 receptor 2 (csf1r2).